A 200-amino-acid chain; its full sequence is uncharacterized protein (200 aa).

The helical transmembrane segment at 7–29 threads the bilayer; sequence FFFLFSFISHAMMLTGLIGSSSF.

It is found in the membrane. This is an uncharacterized protein from Saccharomyces cerevisiae (strain ATCC 204508 / S288c) (Baker's yeast).